Consider the following 511-residue polypeptide: Keratin, type II cytoskeletal 72 (511 aa).

The tract at residues 1-124 (MSRQLTHFPR…DPEIQRVRAQ (124 aa)) is head. A coil 1A region spans residues 125–160 (EREQIKALNNKFASFIDKVRFLEQQNQVLETKWNLL). Residues 125-438 (EREQIKALNN…KLLESEECRM (314 aa)) enclose the IF rod domain. Positions 161–179 (QQLDLNNCRKNLEPIYEGY) are linker 1. Positions 180-271 (ISNLQKQLEM…CLYEGEITQI (92 aa)) are coil 1B. A linker 12 region spans residues 272 to 295 (QSHISDTSIVLSMDNNRDLDLDSI). The segment at 296–434 (IAEVRAQYEE…ATYRKLLESE (139 aa)) is coil 2. The tail stretch occupies residues 435–511 (ECRMSGEYPN…SSCATKKASR (77 aa)). A disordered region spans residues 486–511 (GSCGSELKDPLAKTSGSSCATKKASR).

Belongs to the intermediate filament family. In terms of assembly, heterotetramer of two type I and two type II keratins. As to expression, highly expressed in hair follicles from scalp and eyebrow. Also expressed in palmoplantar epidermis. Not expressed in face skin despite the presence of fine hairs histologically. In hair, it is specifically present in the inner root sheath (IRS) of the hair follicle. Present in the IRS cuticle, but not in Henle or Huxley layers of the IRS. In the IRS cuticle, its presence is delayed up to the height of the apex of the dermal papilla (at protein level).

In terms of biological role, has a role in hair formation. Specific component of keratin intermediate filaments in the inner root sheath (IRS) of the hair follicle. This is Keratin, type II cytoskeletal 72 (KRT72) from Homo sapiens (Human).